A 630-amino-acid polypeptide reads, in one-letter code: Plastin-3 (630 aa).

2 consecutive EF-hand domains span residues 12–47 (DELD…ANMP) and 52–87 (KVRE…VKSS). Positions 25, 27, 29, 36, 65, 67, 69, 71, and 76 each coordinate Ca(2+). Actin-binding regions lie at residues 109–382 (TSEL…ALTK) and 383–627 (PENQ…GRGM). Calponin-homology (CH) domains are found at residues 123–239 (EEEK…KIGL) and 267–378 (LSPE…NKYP). 4 positions are modified to phosphoserine: S268, S293, S326, and S339. Position 391 is a phosphothreonine (T391). 2 consecutive Calponin-homology (CH) domains span residues 397 to 506 (TREE…RRYT) and 518 to 627 (KATD…GRGM).

In terms of assembly, monomer.

It localises to the cytoplasm. Actin-bundling protein. This Rattus norvegicus (Rat) protein is Plastin-3 (Pls3).